The chain runs to 120 residues: Glycine cleavage system H protein (120 aa).

Residues 17-99 (VATVGITNYA…QGAGWFFKLK (83 aa)) enclose the Lipoyl-binding domain. An N6-lipoyllysine modification is found at Lys58.

It belongs to the GcvH family. In terms of assembly, the glycine cleavage system is composed of four proteins: P, T, L and H. (R)-lipoate serves as cofactor.

In terms of biological role, the glycine cleavage system catalyzes the degradation of glycine. The H protein shuttles the methylamine group of glycine from the P protein to the T protein. The polypeptide is Glycine cleavage system H protein (Rhizobium leguminosarum bv. trifolii (strain WSM2304)).